The following is a 481-amino-acid chain: MSPETETGATSSVPRSLFDKVWDAHQVRAETAETPGLLYIDLHLVHEVTSPQAFSVLAERGLKVRRPDRTLATIDHATPTLDFAAGETPPYATAAAQNQVETLQSNTAQHGITLHGWGSGHRGVVHVIGPELGATQPGMTIVCGDSHTATHGAFGALAFGIGTTEVGHVLASQCLLQRKPKSMRVTVDGETAAGISAKDIILAIIAEIGVDGGTGCVIEYAGSAIEALDMEGRMTVCNMSIEAGARAGMIAPDETTFAWLEGREQVPTGSEWDAAIDRWRALRSDAGARFDHEVMIDAASIRPMVTWGTAPDTGIAVNAPIPQPRSPSHRKALAYMGLEAGMPVAGTQVDQVFIGSCTNSRITDLREAAAIMSGRRVADGIRALVVPGSVAVRAQAEAEGLDRIFTDAGAEWRQPGCSMCIAMNGDRGEPGQLVVSTSNRNFEGRQGPGVRTVLASPATAAAAAIAGHVIDPAELMEPAHA.

Residues Cys357, Cys417, and Cys420 each coordinate [4Fe-4S] cluster.

The protein belongs to the aconitase/IPM isomerase family. LeuC type 1 subfamily. Heterodimer of LeuC and LeuD. It depends on [4Fe-4S] cluster as a cofactor.

The enzyme catalyses (2R,3S)-3-isopropylmalate = (2S)-2-isopropylmalate. It participates in amino-acid biosynthesis; L-leucine biosynthesis; L-leucine from 3-methyl-2-oxobutanoate: step 2/4. Catalyzes the isomerization between 2-isopropylmalate and 3-isopropylmalate, via the formation of 2-isopropylmaleate. The protein is 3-isopropylmalate dehydratase large subunit of Maricaulis maris (strain MCS10) (Caulobacter maris).